Consider the following 98-residue polypeptide: Large ribosomal subunit protein uL23 (98 aa).

The protein belongs to the universal ribosomal protein uL23 family. In terms of assembly, part of the 50S ribosomal subunit. Contacts protein L29, and trigger factor when it is bound to the ribosome.

Its function is as follows. One of the early assembly proteins it binds 23S rRNA. One of the proteins that surrounds the polypeptide exit tunnel on the outside of the ribosome. Forms the main docking site for trigger factor binding to the ribosome. The sequence is that of Large ribosomal subunit protein uL23 from Clostridium botulinum (strain Eklund 17B / Type B).